Consider the following 324-residue polypeptide: tRNA dimethylallyltransferase (324 aa).

Glycine 17 to threonine 24 is an ATP binding site. Threonine 19–threonine 24 lines the substrate pocket. 4 interaction with substrate tRNA regions span residues aspartate 42–leucine 45, glutamine 166–arginine 170, arginine 251–arginine 256, and lysine 284–arginine 291.

Belongs to the IPP transferase family. In terms of assembly, monomer. It depends on Mg(2+) as a cofactor.

It carries out the reaction adenosine(37) in tRNA + dimethylallyl diphosphate = N(6)-dimethylallyladenosine(37) in tRNA + diphosphate. Its function is as follows. Catalyzes the transfer of a dimethylallyl group onto the adenine at position 37 in tRNAs that read codons beginning with uridine, leading to the formation of N6-(dimethylallyl)adenosine (i(6)A). The chain is tRNA dimethylallyltransferase from Burkholderia orbicola (strain MC0-3).